Consider the following 312-residue polypeptide: MELLALRWVLLAGTLLSTSAASSALQEGDLGSITVIMDMALNSFDDQYLLCEDRMRARLQMENITEFSTNIAYAVTWRQAAAEWQKRWGHLARPMQLIREQAIALLAYSASSRMCTLFNEATRQGGRSHQDYIHSYHFKTLHFFLTQALFALRASQPRCYYVYRGVRGIRFMTQRGKSVRFGQFTSTSLRKEATVNFGQDTLFVVKTCYGVPIKQFSFFPSEDEVLIPPFEVFEVINFSNDRGSVKIQLHSKGKMSTHNCELLKPQGGQWGRGHQEVGLGLSPGLSLPVLPCRRRVWEGLGHREGDPIPAAV.

The N-terminal stretch at 1 to 20 (MELLALRWVLLAGTLLSTSA) is a signal peptide. The propeptide occupies 21-31 (ASSALQEGDLG). 2 cysteine pairs are disulfide-bonded: cysteine 51/cysteine 260 and cysteine 159/cysteine 208. The TR mART core domain maps to 71–256 (IAYAVTWRQA…IQLHSKGKMS (186 aa)). The NAD(+) site is built by tyrosine 108, arginine 164, and glutamine 183. Residue arginine 164 is part of the active site. The active site involves serine 186. Residue serine 217 coordinates NAD(+). Glutamate 224 is an active-site residue. The propeptide occupies 267-312 (GGQWGRGHQEVGLGLSPGLSLPVLPCRRRVWEGLGHREGDPIPAAV).

The protein belongs to the Arg-specific ADP-ribosyltransferase family.

It localises to the secreted. The protein localises to the extracellular space. It carries out the reaction L-arginyl-[protein] + NAD(+) = N(omega)-(ADP-D-ribosyl)-L-arginyl-[protein] + nicotinamide + H(+). The polypeptide is NAD(P)(+)--arginine ADP-ribosyltransferase 1 (Gallus gallus (Chicken)).